Consider the following 225-residue polypeptide: Small ribosomal subunit protein uS3 (225 aa).

In terms of domain architecture, KH type-2 spans 38 to 106; the sequence is LRGHLRKKLS…DVALNIVEIR (69 aa).

Belongs to the universal ribosomal protein uS3 family. As to quaternary structure, part of the 30S ribosomal subunit. Forms a tight complex with proteins S10 and S14.

Its function is as follows. Binds the lower part of the 30S subunit head. Binds mRNA in the 70S ribosome, positioning it for translation. This chain is Small ribosomal subunit protein uS3, found in Granulibacter bethesdensis (strain ATCC BAA-1260 / CGDNIH1).